Reading from the N-terminus, the 292-residue chain is 33 kDa chaperonin (292 aa).

Intrachain disulfides connect Cys-229–Cys-231 and Cys-262–Cys-265.

The protein belongs to the HSP33 family. In terms of processing, under oxidizing conditions two disulfide bonds are formed involving the reactive cysteines. Under reducing conditions zinc is bound to the reactive cysteines and the protein is inactive.

It is found in the cytoplasm. Redox regulated molecular chaperone. Protects both thermally unfolding and oxidatively damaged proteins from irreversible aggregation. Plays an important role in the bacterial defense system toward oxidative stress. The chain is 33 kDa chaperonin from Photobacterium profundum (strain SS9).